Here is a 342-residue protein sequence, read N- to C-terminus: Anthranilate phosphoribosyltransferase (342 aa).

Residues Gly-84, 87-88 (GD), Thr-92, 94-97 (NIST), 112-120 (KHGNRGVSS), and Ser-124 contribute to the 5-phospho-alpha-D-ribose 1-diphosphate site. Gly-84 contributes to the anthranilate binding site. Ser-96 provides a ligand contact to Mg(2+). Asn-115 is an anthranilate binding site. Arg-170 provides a ligand contact to anthranilate. Positions 229 and 230 each coordinate Mg(2+).

This sequence belongs to the anthranilate phosphoribosyltransferase family. In terms of assembly, homodimer. Mg(2+) serves as cofactor.

It carries out the reaction N-(5-phospho-beta-D-ribosyl)anthranilate + diphosphate = 5-phospho-alpha-D-ribose 1-diphosphate + anthranilate. It functions in the pathway amino-acid biosynthesis; L-tryptophan biosynthesis; L-tryptophan from chorismate: step 2/5. Catalyzes the transfer of the phosphoribosyl group of 5-phosphorylribose-1-pyrophosphate (PRPP) to anthranilate to yield N-(5'-phosphoribosyl)-anthranilate (PRA). The chain is Anthranilate phosphoribosyltransferase from Cupriavidus metallidurans (strain ATCC 43123 / DSM 2839 / NBRC 102507 / CH34) (Ralstonia metallidurans).